The chain runs to 386 residues: Homoserine O-succinyltransferase (386 aa).

The 310-residue stretch at 49–358 (NAILICHALS…DAEQGHDSFL (310 aa)) folds into the AB hydrolase-1 domain. The active-site Nucleophile is the serine 156. Residue arginine 226 participates in substrate binding. Active-site residues include aspartate 321 and histidine 354. Residue aspartate 355 participates in substrate binding.

The protein belongs to the AB hydrolase superfamily. MetX family. Homodimer.

The protein resides in the cytoplasm. The catalysed reaction is L-homoserine + succinyl-CoA = O-succinyl-L-homoserine + CoA. It participates in amino-acid biosynthesis; L-methionine biosynthesis via de novo pathway; O-succinyl-L-homoserine from L-homoserine: step 1/1. Its function is as follows. Transfers a succinyl group from succinyl-CoA to L-homoserine, forming succinyl-L-homoserine. The sequence is that of Homoserine O-succinyltransferase from Acinetobacter baumannii (strain AB307-0294).